The primary structure comprises 515 residues: Folate synthesis bifunctional protein, mitochondrial (515 aa).

A mitochondrion-targeting transit peptide spans 1–28; it reads MSILKCLGVRGNQLCAARNYLKVLGFSS. Residues 47–172 form an HPPK region; sequence VIALGSNVGD…PFVMAPLMDL (126 aa). Residues 230–498 form the Pterin-binding domain; that stretch reads TLVMGILNLT…NVKDNLDAVK (269 aa). The tract at residues 232–515 is DHPS; sequence VMGILNLTPD…QKSSPIKFKQ (284 aa). Asn-237 lines the Mg(2+) pocket. (7,8-dihydropterin-6-yl)methyl diphosphate-binding positions include Thr-277, Asp-314, Asn-333, Asp-406, Lys-451, and 486-488; that span reads RVH.

It in the N-terminal section; belongs to the HPPK family. In the C-terminal section; belongs to the DHPS family. Homomultimer. It depends on Mg(2+) as a cofactor.

The protein localises to the mitochondrion. The enzyme catalyses 6-hydroxymethyl-7,8-dihydropterin + ATP = (7,8-dihydropterin-6-yl)methyl diphosphate + AMP + H(+). It carries out the reaction (7,8-dihydropterin-6-yl)methyl diphosphate + 4-aminobenzoate = 7,8-dihydropteroate + diphosphate. It participates in cofactor biosynthesis; tetrahydrofolate biosynthesis; 2-amino-4-hydroxy-6-hydroxymethyl-7,8-dihydropteridine diphosphate from 7,8-dihydroneopterin triphosphate: step 4/4. It functions in the pathway cofactor biosynthesis; tetrahydrofolate biosynthesis; 7,8-dihydrofolate from 2-amino-4-hydroxy-6-hydroxymethyl-7,8-dihydropteridine diphosphate and 4-aminobenzoate: step 1/2. Functionally, catalyzes the first two consecutive steps of tetrahydrofolate biosynthesis. The chain is Folate synthesis bifunctional protein, mitochondrial from Pisum sativum (Garden pea).